The sequence spans 703 residues: Phenylalanine aminomutase (L-beta-phenylalanine forming) (703 aa).

Tyr-79 (proton donor/acceptor) is an active-site residue. The 5-imidazolinone (Ala-Gly) cross-link spans 177–179 (ASG). 2,3-didehydroalanine (Ser) is present on Ser-178.

The protein belongs to the PAL/histidase family. Post-translationally, contains an active site 4-methylidene-imidazol-5-one (MIO), which is formed autocatalytically by cyclization and dehydration of residues Ala-Ser-Gly.

The catalysed reaction is L-phenylalanine = L-beta-phenylalanine. It functions in the pathway mycotoxin biosynthesis. Functionally, phenylalanine aminomutase; part of the gene cluster that mediates the biosynthesis of the mycotoxin cyclochlorotine, a hepatotoxic and carcinogenic cyclic chlorinated pentapeptide. Within the pathway, cctP1 provides the uncommon building block beta-Phe from Phe. The NRPS cctN initially catalyzes the condensation of L-serine (Ser), Pro, L-2-aminobutyrate (2Abu), Ser, and beta-Phe in this order to produce isocyclotine. After the dichlorination of Pro2 catalyzed by cctP2 to produce isocyclochlorotine, the cctO-mediated transacylation of isocyclochlorotine can furnish cyclochlorotine. The subsequent hydroxylation of cyclochlorotine by cctR yields hydroxycyclochlorotine as the final product. CctP1 probably acts as a phenylalanine aminomutase and provides the uncommon building block beta-Phe. Furthermore, 2Abu can be synthesized from threonine by one of the threonine dehydratases and transaminases localized outside of the cluster. The functions of the remaining proteins encoded by the cluster, cctM and cctT, have not been identified yet. In Talaromyces islandicus (Penicillium islandicum), this protein is Phenylalanine aminomutase (L-beta-phenylalanine forming).